A 107-amino-acid chain; its full sequence is MDWRAAEDLACDFLKKKGYRILERNYRTKYGEIDIIARCGKETVFVEVKSGRGKVDPLERIDMKKVRNIEKAAKLYMLQKGLKGPVRVDFVRVTPKGIDHFEGLWLG.

It belongs to the UPF0102 family.

In Thermotoga neapolitana (strain ATCC 49049 / DSM 4359 / NBRC 107923 / NS-E), this protein is UPF0102 protein CTN_0433.